A 512-amino-acid polypeptide reads, in one-letter code: MVWEVKSNQMPDAVQKLLLVMDKRAPGVSDSLQLLQCKETLPSSPGYNSCDEHMELDDLPELQAVQSDPTPSAIYQLSSDVSHQEYPRPSWNQNTSEISENTYRENEVDWLTELANIATSPQSPLMQCSFYNRSSPVHIIATSKSLHSYARPPPVASSKGEPAFPHHWKEQTPVRHERANSESESGIFCMSSLSDDDDLGWCNSWPSTAWHCFLKGTRLCFHKGSNKEWQNVEDFARTEGCDNEEDLQMGTHKDYGSDGLKLLSHEESVSFGESVLKLTFDPGTVEDGLLTVECKLDHPFYVKNKGWSSFYPSLTVVQHGIPCCEIHIGDVCLPPGHPDAINFDDSGVFDTFKSYDFTPMDSSAVYVLSSMARQRRASLSCGGPGGQDFERSGFSKNCGSPGSSQLSSSSLYAKAVKTHSSGTVSATSPNKCKRPMNAFMLFAKKYRVEYTQMYPGKDNRAISVILGDRWKKMKNEERRMYTLEAKALAEEQKRLNPDCWKRKRTNSGSQQH.

The disordered stretch occupies residues 151–180 (RPPPVASSKGEPAFPHHWKEQTPVRHERAN). Over residues 167–180 (HWKEQTPVRHERAN) the composition is skewed to basic and acidic residues. The AXH domain maps to 201 to 343 (WCNSWPSTAW…PPGHPDAINF (143 aa)). The HMG box DNA-binding region spans 432–500 (CKRPMNAFML…EQKRLNPDCW (69 aa)).

Binds TCF4. Binds RB1. Binds the second PAH repeat of SIN3A. Ubiquitinated by the CTLH E3 ubiquitin-protein ligase complex, leading to subsequent proteasomal degradation.

The protein resides in the nucleus. In terms of biological role, transcriptional repressor that binds to the promoter region of target genes. Plays a role in the regulation of the cell cycle and of the Wnt pathway. Binds preferentially to the sequence 5'-TTCATTCATTCA-3'. Binding to the histone H1.0 promoter is enhanced by interaction with RB1. Disrupts the interaction between DNA and TCF4. The polypeptide is HMG box-containing protein 1 (HBP1) (Bos taurus (Bovine)).